Here is a 496-residue protein sequence, read N- to C-terminus: Alanine aminotransferase 1 (496 aa).

An N-acetylalanine modification is found at Ala-2. Thr-22 carries the post-translational modification Phosphothreonine. Lys-314 bears the N6-(pyridoxal phosphate)lysine mark.

This sequence belongs to the class-I pyridoxal-phosphate-dependent aminotransferase family. Alanine aminotransferase subfamily. As to quaternary structure, homodimer. Requires pyridoxal 5'-phosphate as cofactor. As to expression, mainly expressed in liver, intestine, colon and white adipose tissue.

The protein resides in the cytoplasm. The enzyme catalyses L-alanine + 2-oxoglutarate = pyruvate + L-glutamate. The protein operates within amino-acid degradation; L-alanine degradation via transaminase pathway; pyruvate from L-alanine: step 1/1. Catalyzes the reversible transamination between alanine and 2-oxoglutarate to form pyruvate and glutamate. Participates in cellular nitrogen metabolism and also in liver gluconeogenesis starting with precursors transported from skeletal muscles. The polypeptide is Alanine aminotransferase 1 (Gpt) (Mus musculus (Mouse)).